The primary structure comprises 379 residues: Protein RecA (379 aa).

A disordered region spans residues 1–23 (MSVDVKSAQSSKSDSLQVEPRPG). Residues 7-16 (SAQSSKSDSL) are compositionally biased toward polar residues. 84-91 (GPESSGKT) serves as a coordination point for ATP.

Belongs to the RecA family.

Its subcellular location is the cytoplasm. Its function is as follows. Can catalyze the hydrolysis of ATP in the presence of single-stranded DNA, the ATP-dependent uptake of single-stranded DNA by duplex DNA, and the ATP-dependent hybridization of homologous single-stranded DNAs. It interacts with LexA causing its activation and leading to its autocatalytic cleavage. This chain is Protein RecA, found in Prochlorococcus marinus (strain MIT 9313).